The primary structure comprises 257 residues: Imidazole glycerol phosphate synthase subunit HisF (257 aa).

Active-site residues include aspartate 11 and aspartate 130.

Belongs to the HisA/HisF family. In terms of assembly, heterodimer of HisH and HisF.

It localises to the cytoplasm. It catalyses the reaction 5-[(5-phospho-1-deoxy-D-ribulos-1-ylimino)methylamino]-1-(5-phospho-beta-D-ribosyl)imidazole-4-carboxamide + L-glutamine = D-erythro-1-(imidazol-4-yl)glycerol 3-phosphate + 5-amino-1-(5-phospho-beta-D-ribosyl)imidazole-4-carboxamide + L-glutamate + H(+). Its pathway is amino-acid biosynthesis; L-histidine biosynthesis; L-histidine from 5-phospho-alpha-D-ribose 1-diphosphate: step 5/9. IGPS catalyzes the conversion of PRFAR and glutamine to IGP, AICAR and glutamate. The HisF subunit catalyzes the cyclization activity that produces IGP and AICAR from PRFAR using the ammonia provided by the HisH subunit. The sequence is that of Imidazole glycerol phosphate synthase subunit HisF from Prochlorococcus marinus (strain MIT 9515).